A 213-amino-acid chain; its full sequence is Ribosomal RNA large subunit methyltransferase E (213 aa).

S-adenosyl-L-methionine is bound by residues glycine 60, tryptophan 62, aspartate 80, aspartate 96, and aspartate 121. Lysine 161 (proton acceptor) is an active-site residue.

Belongs to the class I-like SAM-binding methyltransferase superfamily. RNA methyltransferase RlmE family.

It localises to the cytoplasm. The catalysed reaction is uridine(2552) in 23S rRNA + S-adenosyl-L-methionine = 2'-O-methyluridine(2552) in 23S rRNA + S-adenosyl-L-homocysteine + H(+). Functionally, specifically methylates the uridine in position 2552 of 23S rRNA at the 2'-O position of the ribose in the fully assembled 50S ribosomal subunit. The polypeptide is Ribosomal RNA large subunit methyltransferase E (Xylella fastidiosa (strain M23)).